Reading from the N-terminus, the 233-residue chain is Large ribosomal subunit protein uL1 (233 aa).

This sequence belongs to the universal ribosomal protein uL1 family. In terms of assembly, part of the 50S ribosomal subunit.

Functionally, binds directly to 23S rRNA. The L1 stalk is quite mobile in the ribosome, and is involved in E site tRNA release. Its function is as follows. Protein L1 is also a translational repressor protein, it controls the translation of the L11 operon by binding to its mRNA. The polypeptide is Large ribosomal subunit protein uL1 (Psychrobacter cryohalolentis (strain ATCC BAA-1226 / DSM 17306 / VKM B-2378 / K5)).